Consider the following 1500-residue polypeptide: MRRNQLPIPVFLLLLLLLPRDATAATGKPRYVVLVPSELYAGVPEKVCVHLNHLNETVTLNVTLEYGVQYSNLLIDQAVDKDSSYCSSFTISRPLSPSALIAVEIKGPTHHFIKKKSMWITKAESPVFVQTDKPIYKPGQTVKFRVVSVDISFRPVNETFPVVYIENPKRNRIFQWQNVDLPGGLHQLSFPLSVEPALGIYKVVVQKDSGKKIEHSFEVKEYVLPKFEVQVKMPKTMAFLEEELVVTACGLYTYGKPVPGLVTMKVCRKYTQSYSNCHGQHSKSICEEFSKQADEKGCFRQVVKTKVFQPRQKGYDMKIEVEAKIKEDGTGIELTGTGSCEIANTLSKLKFTKANTFYRPGLPFFGQVLLVDEKGQPIPNKNLTVQVNSVRSQFTFTTDEHGLANILIDTTNFTFSFMGIRVIYKQNNICFDNWWVDEYHTQADHSAARIFSPSRSYIQLELVLGTLACGQTQEIRIHFLLNEDALKDAKDLTFYYLIKARGSIFNSGSHVLPLEQGKVKGVVSFPIRVEPGMAPVAKLIVYTILPNEELIADVQKFDIEKCFANTVNLSFPSAQSLPASDTHLTVKATPLSLCALTAVDQSVLLLKPEAKLSPQSIYNLLPQKAEQGAYLGPLPYKGGENCIKAEDITHNGIVYTPKQDLNDNDAYSVFQSIGLKIFTNTRVHKPRYCPMYQAYPPLPYVGEPQALAMSAIPGAGYRSSNIRTSSMMMMGASEVAQEVEVRETVRKYFPETWIWDMVPLDLSGDGELPVKVPDTITEWKASAFCLSGTTGLGLSSTISHKVFQPFFLELTLPYSVVRGEAFILKATVLNYMPHCIRIHVSLEMSPDFLAVPVGSHEDSHCICGNERKTVSWAVTPKSLGEVNFTATAEALQSPELCGNKVAEVPALVQKDTVVKPVIVEPEGIEKEQTYNTLLCPQDAELQENWTLDLPANVVEGSARATQSVLGDILGSAMQNLQNLLQMPYGCGEQNMVLFVPNIYVLEYLNETQQLTEAIKSKAISYLISGYQRQLNYQHSDGSYSTFGDRGMRHSQGNTWLTAFVLKAFAQAQSYIYIEKTHITNAFNWLSMKQRENGCFQQSGSLLNNAMKGGVDDEVTLSAYITIALLEMPLPVTHSVVRNALFCLETAWASISNSQESHVYTKALLAYAFALAGNRAKRSEVLESLNKDAVNEEESVHWQRPKNVEENVREMRSFSYKPRAPSAEVEMTAYVLLAYLTSASSRPTRDLSSSDLTTASKIVKWISKQQNSHGGFSSTQDTVVALQALSKYGAATFTKSNKEVSVTIESSGTVSGTLHVNNGNRLLLQEVRLADLPGNYITKVSGSGCVYLQTSLKYNILPEAEGEAPFTLKVNTLPLNFDKAEHHRKFQIHINVSYIGERPNSNMVIVDVKMVSGFIPVKPSVKKLQDQSNIQRTEVNTNHVLIYIEKLTNQTMGFSFAVEQDIPVKNLKPAPVKVYDYYETDEFAIEEYSAPFSSDSEQGNA.

An N-terminal signal peptide occupies residues 1-24 (MRRNQLPIPVFLLLLLLLPRDATA). Residues Cys-48 and Cys-86 are joined by a disulfide bond. N-linked (GlcNAc...) asparagine glycans are attached at residues Asn-55, Asn-61, and Asn-157. 2 disulfide bridges follow: Cys-249/Cys-298 and Cys-267/Cys-286. 2 N-linked (GlcNAc...) asparagine glycosylation sites follow: Asn-382 and Asn-412. Cys-469 and Cys-562 form a disulfide bridge. N-linked (GlcNAc...) asparagine glycosylation occurs at Asn-568. Disulfide bonds link Cys-594–Cys-785, Cys-642–Cys-689, Cys-835–Cys-863, Cys-861–Cys-897, Cys-935–Cys-1344, and Cys-1094–Cys-1142. Residues 686–746 (PRYCPMYQAY…QEVEVRETVR (61 aa)) are bait region. Asn-883 and Asn-944 each carry an N-linked (GlcNAc...) asparagine glycan. Positions 986-989 (CGEQ) form a cross-link, isoglutamyl cysteine thioester (Cys-Gln). N-linked (GlcNAc...) asparagine glycosylation occurs at Asn-1005. The receptor-binding domain stretch occupies residues 1360–1500 (EGEAPFTLKV…FSSDSEQGNA (141 aa)). N-linked (GlcNAc...) asparagine glycosylation is found at Asn-1390 and Asn-1448.

This sequence belongs to the protease inhibitor I39 (alpha-2-macroglobulin) family. In terms of assembly, homotetramer; disulfide-linked. In terms of tissue distribution, widely expressed. Highest level in ovary, testis, uterus and prostate. Protein found in plasma.

The protein resides in the secreted. Is able to inhibit all four classes of proteinases by a unique 'trapping' mechanism. This protein has a peptide stretch, called the 'bait region' which contains specific cleavage sites for different proteinases. When a proteinase cleaves the bait region, a conformational change is induced in the protein which traps the proteinase. The entrapped enzyme remains active against low molecular weight substrates (activity against high molecular weight substrates is greatly reduced). Following cleavage in the bait region a thioester bond is hydrolyzed and mediates the covalent binding of the protein to the proteinase. This Rattus norvegicus (Rat) protein is Alpha-1-macroglobulin.